The sequence spans 407 residues: NADH-quinone oxidoreductase subunit D (407 aa).

The protein belongs to the complex I 49 kDa subunit family. In terms of assembly, NDH-1 is composed of 14 different subunits. Subunits NuoB, C, D, E, F, and G constitute the peripheral sector of the complex.

It is found in the cell inner membrane. It carries out the reaction a quinone + NADH + 5 H(+)(in) = a quinol + NAD(+) + 4 H(+)(out). In terms of biological role, NDH-1 shuttles electrons from NADH, via FMN and iron-sulfur (Fe-S) centers, to quinones in the respiratory chain. The immediate electron acceptor for the enzyme in this species is believed to be ubiquinone. Couples the redox reaction to proton translocation (for every two electrons transferred, four hydrogen ions are translocated across the cytoplasmic membrane), and thus conserves the redox energy in a proton gradient. The chain is NADH-quinone oxidoreductase subunit D from Roseobacter denitrificans (strain ATCC 33942 / OCh 114) (Erythrobacter sp. (strain OCh 114)).